The following is a 299-amino-acid chain: ATP phosphoribosyltransferase (299 aa).

Belongs to the ATP phosphoribosyltransferase family. Long subfamily. In terms of assembly, equilibrium between an active dimeric form, an inactive hexameric form and higher aggregates. Interconversion between the various forms is largely reversible and is influenced by the natural substrates and inhibitors of the enzyme. The cofactor is Mg(2+).

The protein localises to the cytoplasm. It carries out the reaction 1-(5-phospho-beta-D-ribosyl)-ATP + diphosphate = 5-phospho-alpha-D-ribose 1-diphosphate + ATP. Its pathway is amino-acid biosynthesis; L-histidine biosynthesis; L-histidine from 5-phospho-alpha-D-ribose 1-diphosphate: step 1/9. Feedback inhibited by histidine. Functionally, catalyzes the condensation of ATP and 5-phosphoribose 1-diphosphate to form N'-(5'-phosphoribosyl)-ATP (PR-ATP). Has a crucial role in the pathway because the rate of histidine biosynthesis seems to be controlled primarily by regulation of HisG enzymatic activity. The polypeptide is ATP phosphoribosyltransferase (Escherichia fergusonii (strain ATCC 35469 / DSM 13698 / CCUG 18766 / IAM 14443 / JCM 21226 / LMG 7866 / NBRC 102419 / NCTC 12128 / CDC 0568-73)).